Reading from the N-terminus, the 209-residue chain is Molybdenum cofactor guanylyltransferase (209 aa).

Residues 14–16 (LAG), Lys31, and Asp104 each bind GTP. Residue Asp104 participates in Mg(2+) binding.

This sequence belongs to the MobA family. Monomer. It depends on Mg(2+) as a cofactor.

It is found in the cytoplasm. The catalysed reaction is Mo-molybdopterin + GTP + H(+) = Mo-molybdopterin guanine dinucleotide + diphosphate. In terms of biological role, transfers a GMP moiety from GTP to Mo-molybdopterin (Mo-MPT) cofactor (Moco or molybdenum cofactor) to form Mo-molybdopterin guanine dinucleotide (Mo-MGD) cofactor. This is Molybdenum cofactor guanylyltransferase from Helicobacter pylori (strain J99 / ATCC 700824) (Campylobacter pylori J99).